We begin with the raw amino-acid sequence, 697 residues long: Serotransferrin (697 aa).

The signal sequence occupies residues 1 to 19; the sequence is MRLTVGALLACAALGLCLA. Transferrin-like domains are found at residues 25 to 347 and 360 to 682; these read VKWC…NQQE and VKWC…NMRK. Intrachain disulfides connect Cys-28–Cys-67 and Cys-38–Cys-58. Arg-42 is subject to Dimethylated arginine. Residues Asp-82 and Tyr-114 each coordinate Fe(3+). Intrachain disulfides connect Cys-137-Cys-213, Cys-156-Cys-350, Cys-177-Cys-193, Cys-180-Cys-196, Cys-190-Cys-198, Cys-246-Cys-260, Cys-363-Cys-395, and Cys-373-Cys-386. 4 residues coordinate hydrogencarbonate: Thr-139, Arg-143, Ala-145, and Gly-146. Residue Tyr-207 participates in Fe(3+) binding. A Fe(3+)-binding site is contributed by His-268. The residue at position 388 (Ser-388) is a Phosphoserine. Fe(3+)-binding residues include Asp-410 and Tyr-448. Disulfide bonds link Cys-420-Cys-692, Cys-435-Cys-655, Cys-472-Cys-543, Cys-496-Cys-683, Cys-506-Cys-520, Cys-517-Cys-526, Cys-583-Cys-597, and Cys-633-Cys-638. The hydrogencarbonate site is built by Thr-474, Arg-478, Ala-480, and Gly-481. N-linked (GlcNAc...) asparagine glycosylation occurs at Asn-513. A Fe(3+)-binding site is contributed by Tyr-537. His-605 serves as a coordination point for Fe(3+). Phosphoserine is present on Ser-684.

The protein belongs to the transferrin family. In terms of assembly, monomer. Part of a complex composed of SLC40A1/ferroportin, TF/transferrin and HEPH/hephaestin that transfers iron from cells to transferrin. In terms of tissue distribution, expressed by the liver and secreted in plasma.

It localises to the secreted. Functionally, transferrins are iron binding transport proteins which can bind two Fe(3+) ions in association with the binding of an anion, usually bicarbonate. It is responsible for the transport of iron from sites of absorption and heme degradation to those of storage and utilization. Serum transferrin may also have a further role in stimulating cell proliferation. In Mus musculus (Mouse), this protein is Serotransferrin (Tf).